The primary structure comprises 463 residues: Soluble pyridine nucleotide transhydrogenase (463 aa).

Residue 35-44 (EKQQAVGGNC) participates in FAD binding.

It belongs to the class-I pyridine nucleotide-disulfide oxidoreductase family. FAD serves as cofactor.

The protein localises to the cytoplasm. It catalyses the reaction NAD(+) + NADPH = NADH + NADP(+). Conversion of NADPH, generated by peripheral catabolic pathways, to NADH, which can enter the respiratory chain for energy generation. The chain is Soluble pyridine nucleotide transhydrogenase from Chromohalobacter salexigens (strain ATCC BAA-138 / DSM 3043 / CIP 106854 / NCIMB 13768 / 1H11).